We begin with the raw amino-acid sequence, 264 residues long: Indole-3-glycerol phosphate synthase (264 aa).

The protein belongs to the TrpC family.

The enzyme catalyses 1-(2-carboxyphenylamino)-1-deoxy-D-ribulose 5-phosphate + H(+) = (1S,2R)-1-C-(indol-3-yl)glycerol 3-phosphate + CO2 + H2O. The protein operates within amino-acid biosynthesis; L-tryptophan biosynthesis; L-tryptophan from chorismate: step 4/5. The sequence is that of Indole-3-glycerol phosphate synthase from Xylella fastidiosa (strain 9a5c).